The primary structure comprises 504 residues: ATP synthase subunit alpha (504 aa).

Residue 169-176 (GDRQTGKT) participates in ATP binding.

It belongs to the ATPase alpha/beta chains family. In terms of assembly, F-type ATPases have 2 components, CF(1) - the catalytic core - and CF(0) - the membrane proton channel. CF(1) has five subunits: alpha(3), beta(3), gamma(1), delta(1), epsilon(1). CF(0) has three main subunits: a(1), b(2) and c(9-12). The alpha and beta chains form an alternating ring which encloses part of the gamma chain. CF(1) is attached to CF(0) by a central stalk formed by the gamma and epsilon chains, while a peripheral stalk is formed by the delta and b chains.

Its subcellular location is the cell membrane. The catalysed reaction is ATP + H2O + 4 H(+)(in) = ADP + phosphate + 5 H(+)(out). Produces ATP from ADP in the presence of a proton gradient across the membrane. The alpha chain is a regulatory subunit. The protein is ATP synthase subunit alpha of Clostridium botulinum (strain Loch Maree / Type A3).